Here is an 897-residue protein sequence, read N- to C-terminus: uncharacterized protein (897 aa).

Disordered stretches follow at residues 25–89 (RLQD…TRKR) and 106–168 (PTRL…TPPS). Low complexity-rich tracts occupy residues 32–44 (SSSPSSAPSSSSS), 57–68 (SLQNSQSSSYSL), and 106–142 (PTRLTSTPSNSSSLPSIPSSSSTPSISSIPHTTSSVS). The Helicase ATP-binding domain occupies 263–446 (SMEQSSKCGG…YSLLKFLRIK (184 aa)). 276-283 (DDMGLGKT) contributes to the ATP binding site. A DEAH box motif is present at residues 397 to 400 (DEAH). The RING-type zinc-finger motif lies at 606 to 655 (CSVCLDPCLAPVFIIPCGHFTCQECMSMLVGQKYGSSSTSTIIAKCPMCR). Residues 727–890 (QARQTILDII…LSRLDKEELL (164 aa)) form the Helicase C-terminal domain.

This sequence belongs to the SNF2/RAD54 helicase family.

The protein localises to the cytoplasm. The protein resides in the nucleus. This is an uncharacterized protein from Schizosaccharomyces pombe (strain 972 / ATCC 24843) (Fission yeast).